The following is a 685-amino-acid chain: MSTPFGLDLGNNNSVLAVARNRGIDIVVNEVSNRSTPSLVGFGQKNRFLGEAGKTKETSNIKNTVGNLKRIVGLDYTHPDFSTESQFFSSKLVELDDKKVGTQVRLAGESKTFSATQLAAMFIGKVKNTVQQETKSNINDICIAVPAWYSEEQRYSIADAAKVAGLNPVRIVNDVTAAAVSYGVFKTDLPEGDAKPRIVAFVDIGHSSYTCSIMAFKKGELKVLGTAYDKHFGGRDFDRAITEHFADEFKSKYKIDIRTNAKAYNRILTAAEKLKKVLSANTQAPFSAESVMDDVDVSSSMTREELEELVKPLLTRVTEPVTKALAQANLTVEDIDFVEIIGGTTRIPTLKNSISEAFNKPLSTTLNQDEAIAKGAAFICAIHSPTLRVRPFKFEDIHPYSVSYSWDKQVEEEESMEVFPAGSTFPSTKLITLQRTGDFQMSAYYTTPEQLPKGTKADIAKWEITGLQVPEGAESVPVKVVLRCDPSGLHTIEEAYTVEDIKVQEVVPLPEDAPEDAEPEFREVTKTVKKDALTIVAHTFALEGKPLNDLIEKENAMFAQDKLVAETEDRKNALEEYIYTLRGKLEEEYAPFASEAEKTKLTGMLAKAEEWLYDEGYDSIKAKYIAKYEELASLGNMIRGRYLAKEEEKRQALRSNQEASKMADLSAKLAAQRKAEAEAKENAKE.

Positions 651–685 are disordered; sequence QALRSNQEASKMADLSAKLAAQRKAEAEAKENAKE. A compositionally biased stretch (basic and acidic residues) spans 673–685; that stretch reads RKAEAEAKENAKE.

It belongs to the heat shock protein 70 family.

The protein resides in the cytoplasm. The sequence is that of Heat shock protein homolog SSE1 (SSE1) from Naumovozyma castellii (Yeast).